Reading from the N-terminus, the 104-residue chain is Small ribosomal subunit protein uS10 (104 aa).

This sequence belongs to the universal ribosomal protein uS10 family. In terms of assembly, part of the 30S ribosomal subunit.

Involved in the binding of tRNA to the ribosomes. This Maricaulis maris (strain MCS10) (Caulobacter maris) protein is Small ribosomal subunit protein uS10.